The sequence spans 127 residues: Large ribosomal subunit protein bL20 (127 aa).

The protein belongs to the bacterial ribosomal protein bL20 family.

Binds directly to 23S ribosomal RNA and is necessary for the in vitro assembly process of the 50S ribosomal subunit. It is not involved in the protein synthesizing functions of that subunit. The chain is Large ribosomal subunit protein bL20 from Corynebacterium aurimucosum (strain ATCC 700975 / DSM 44827 / CIP 107346 / CN-1) (Corynebacterium nigricans).